The sequence spans 1093 residues: MKLLYTDIRHSLTKVLVAEAESLVAAGKRVFYIAPNSLSFEKERSVLECLKTQASFAITVTRFAQMARYFVLNDVRQGQSLDDIGLGMLIYRTLTELDDGELKVYSRIKKDPQFIQQLMDLYHELQTAQMSFADLEFLEEPEKREDLVKIFTAVTAALNKGDFDSSSQIAAFAQHILAGDTDEELADLALVIDGFTRFSAEEEYLVGLLHRKGVEIVIGTYASQKAYRAAFREGNLYQASVDFLRKLAEDYQVKPDYIPHAEAEDAFGRISKILESRYDFSESTVSLSESDRSQLQIWATMNQKEELEYVAKSIRQRVHEGVRYKDIRLLLGDVEAYQLQLKTIFDQYQIPYYLGRSESMAQHPLVQFVESLERLKRYNFQLEDLLNLLKTGLYGDLTQEELDHFEQYLRFADIKGAGKLAKDFTANSQGKFDLDCLNHIRRRVMTPLQDFFKSRSQTASGLLAKFTEFVQAARLSDNLTALLQGESQQEQERHEEVWKAFSHVLEQFAQVFADSKVKLDDFLALVLSGMLLSNYRTVPATVDVVKVQSYDLIEPLAAPYVYAIGLTQERFPKIAQNKSLLSDEDRARLNDATDSQAELQIASSENLKKNRYTALSLMNSATKELVLSAPALVNEVEDSMSTYLLELTAAPLSLPIIVKKPQASSDDIGSYRALLSQIIELHQEEIDREWTAEEQTFWAVAVRVLRKKLAAEGISIPHISKELKTETLQSETLQALYPQEQPLRLSASALNEYFRHQYAYFLKYVLRLQEEWTIHPDARSHGIFLHRIFEKVLQDDSSADFDRRLAQAMEETSREAEFESIYSESGQTRFARQLLLDTARATGRVLAHPSGIETIGEETGFGSASTPFLTLENGRAVTVSGKVDRIDRLTKTESLGVVDYKSGDIKFSFEKFFNGLNSQLPTYLAAIEELADYQEDKGTFGAMYLQMTDPIVALKDTKTLADAVSQSMKPLQYKGLFVADAVKELGPLYEKNKTNLLSQEDLDLLLAYNAYLYKKAAEGILSGHFAVNPYTENGRSIAPYVEQFKAITGFEANLHLGQARQLEKLDASKFDRRPTGDKLRQAWLEKMREEMEK.

It belongs to the helicase family. AddB/RexB type 2 subfamily. As to quaternary structure, heterodimer of AddA and RexB. Mg(2+) is required as a cofactor.

Functionally, the heterodimer acts as both an ATP-dependent DNA helicase and an ATP-dependent, dual-direction single-stranded exonuclease. Recognizes the chi site generating a DNA molecule suitable for the initiation of homologous recombination. This subunit has 5' -&gt; 3' nuclease activity but not helicase activity. The sequence is that of ATP-dependent helicase/deoxyribonuclease subunit B from Streptococcus sanguinis (strain SK36).